A 292-amino-acid polypeptide reads, in one-letter code: Bifunctional protein FolD 1 (292 aa).

An NADP(+)-binding site is contributed by 165-167 (GRS).

It belongs to the tetrahydrofolate dehydrogenase/cyclohydrolase family. Homodimer.

The catalysed reaction is (6R)-5,10-methylene-5,6,7,8-tetrahydrofolate + NADP(+) = (6R)-5,10-methenyltetrahydrofolate + NADPH. It carries out the reaction (6R)-5,10-methenyltetrahydrofolate + H2O = (6R)-10-formyltetrahydrofolate + H(+). Its pathway is one-carbon metabolism; tetrahydrofolate interconversion. Catalyzes the oxidation of 5,10-methylenetetrahydrofolate to 5,10-methenyltetrahydrofolate and then the hydrolysis of 5,10-methenyltetrahydrofolate to 10-formyltetrahydrofolate. This is Bifunctional protein FolD 1 from Myxococcus xanthus (strain DK1622).